The following is a 198-amino-acid chain: MSISLLGRIVSQQFSGIRAAEPGRSLYLPFTLLLKQPGAYKVSLHRYVHSTQTKSHLSFLMNNNDITPFQKFTVKVLKEQCKSRGLKLSGRKSDLLQRLITHDSCSNKKSSVKINEPKKKRILINDPIKITKKLVSDKTFRTIEKNISSLQNTPVIETPCDVHSHLQPRDRIFLLGFFMLSCLWWNLEPQESKPTIDH.

The transit peptide at 1-55 (MSISLLGRIVSQQFSGIRAAEPGRSLYLPFTLLLKQPGAYKVSLHRYVHSTQTKS) directs the protein to the mitochondrion. Residues 69 to 103 (FQKFTVKVLKEQCKSRGLKLSGRKSDLLQRLITHD) enclose the SAP domain. The helical transmembrane segment at 172–187 (IFLLGFFMLSCLWWNL) threads the bilayer.

This sequence belongs to the AIM34 family.

It is found in the mitochondrion membrane. In Saccharomyces cerevisiae (strain YJM789) (Baker's yeast), this protein is Altered inheritance of mitochondria protein 34, mitochondrial (AIM34).